Consider the following 430-residue polypeptide: Small ribosomal subunit protein uS9m (430 aa).

A mitochondrion-targeting transit peptide spans 1-34 (MLSRLFLRHSNLRFVTLVSSKSNSQIFSSFIRPL). Residues 32-97 (RPLSTNSSGG…GGEGKWPEEP (66 aa)) are disordered. A compositionally biased stretch (gly residues) spans 39-48 (SGGGGNGDGN). A compositionally biased stretch (low complexity) spans 68-79 (GPFSSDDSFGSS). A compositionally biased stretch (gly residues) spans 80 to 91 (GVAGSGLPGGEG).

This sequence belongs to the universal ribosomal protein uS9 family. In terms of assembly, interacts (via C terminus) with PIA2. Component of the mitochondrial ribosome small subunit. In terms of tissue distribution, expressed in root tips, young leaves, flowers and siliques.

The protein resides in the mitochondrion. Its function is as follows. Mitochondrial ribosomal protein required for central cell maturation. May work together with PIA2 in controlling female gametophyte development, possibly by regulating the expression of some mitochondrial proteins. The sequence is that of Small ribosomal subunit protein uS9m from Arabidopsis thaliana (Mouse-ear cress).